Reading from the N-terminus, the 499-residue chain is GTPase Der (499 aa).

2 consecutive EngA-type G domains span residues 3–166 (PVVA…LETL) and 213–386 (IKFA…QSAT). Residues 9–16 (GRPNVGKS), 56–60 (DTGGI), 118–121 (NKTD), 219–226 (GRPNVGKS), 266–270 (DTAGV), and 331–334 (NKWD) contribute to the GTP site. Residues 387–471 (RRTSTAMLTR…PIRVEFQESA (85 aa)) enclose the KH-like domain. Residues 476–499 (GRKNTMTLSQERQRKRLLKAKTKK) are disordered. The span at 488–499 (QRKRLLKAKTKK) shows a compositional bias: basic residues.

Belongs to the TRAFAC class TrmE-Era-EngA-EngB-Septin-like GTPase superfamily. EngA (Der) GTPase family. In terms of assembly, associates with the 50S ribosomal subunit.

Functionally, GTPase that plays an essential role in the late steps of ribosome biogenesis. This chain is GTPase Der, found in Aeromonas salmonicida (strain A449).